A 37-amino-acid chain; its full sequence is Large ribosomal subunit protein bL36c (37 aa).

This sequence belongs to the bacterial ribosomal protein bL36 family.

It localises to the plastid. Its subcellular location is the chloroplast. The sequence is that of Large ribosomal subunit protein bL36c from Oenothera argillicola (Appalachian evening primrose).